The chain runs to 161 residues: Large ribosomal subunit protein uL15 (161 aa).

The disordered stretch occupies residues 1-47 (MKLHELHDNPGANRKKKRVARGPGSGKGKTAGRGIKGQTSRSGVALN). Residues 23–35 (PGSGKGKTAGRGI) show a composition bias toward gly residues.

The protein belongs to the universal ribosomal protein uL15 family. In terms of assembly, part of the 50S ribosomal subunit.

Its function is as follows. Binds to the 23S rRNA. The sequence is that of Large ribosomal subunit protein uL15 from Paracoccus denitrificans (strain Pd 1222).